We begin with the raw amino-acid sequence, 964 residues long: DNA polymerase (964 aa).

The protein belongs to the DNA polymerase type-B family.

The enzyme catalyses DNA(n) + a 2'-deoxyribonucleoside 5'-triphosphate = DNA(n+1) + diphosphate. Its function is as follows. Catalyzes DNA synthesis. This Choristoneura biennis entomopoxvirus (CbEPV) protein is DNA polymerase (POL).